The sequence spans 497 residues: MVLAQLGGSISRALAQMSNATVIDEKVLGECLNEISRALLQSDVQFKMVRDMQTNIRKIVNLETLAAGTNKRRIIQQAVFTELCNMLDPGKPAFTTKKGKPSVVMFVGLQGSGKTTTCTKYAYYHQRKGFKPSLVCADTFRAGAFDQLKQNATKAKIPFYGSYMESDPVKIAVEGLERFRKENSDLIIIDTSGRHKQEAALFEEMRQVAEATKPDLVIFVMDGSIGQAAFDQAQAFKQSASVGAVIITKLDGHAKGGGALSAVAATKSPVIFIGTGEHIDEFEIFDVKPFVSRLLGMGDLSGLMDKIQDVMPADQQPELLAKLAEGTFTLRLLYEQFQNLLKMGPIGQVFSMLPGFSSELMPKGHEKEGQAKIKRYMTIMDSMTAAELDSTNPKLMTESRIIRIARGSGRQIRDVTDMLEEYKRLAKMWSKMKGLKMPKNGKMSDLSQNLNIQQMTKALPPQVLKQMGGMGGLQALMKQMGGKDMSKMLGGMGLGGD.

Residues 1 to 295 (MVLAQLGGSI…DVKPFVSRLL (295 aa)) are G-domain. Residues 108-115 (GLQGSGKT), 190-194 (DTSGR), and 248-251 (TKLD) contribute to the GTP site. The M-domain stretch occupies residues 296–497 (GMGDLSGLMD…MLGGMGLGGD (202 aa)).

This sequence belongs to the GTP-binding SRP family. SRP54 subfamily. In terms of assembly, component of a signal recognition particle (SRP) complex that consists of a 7SL RNA molecule of 300 nucleotides and six protein subunits: SRP72, SRP68, SRP54, SRP19, SRP14 and SRP9.

Its subcellular location is the cytoplasm. It is found in the endoplasmic reticulum. The catalysed reaction is GTP + H2O = GDP + phosphate + H(+). In terms of biological role, component of the signal recognition particle (SRP) complex, a ribonucleoprotein complex that mediates the cotranslational targeting of secretory and membrane proteins to the endoplasmic reticulum (ER). As part of the SRP complex, associates with the SRP receptor (SR) component SRPRA to target secretory proteins to the endoplasmic reticulum membrane. Binds to the signal sequence of presecretory proteins when they emerge from the ribosomes. Displays basal GTPase activity, and stimulates reciprocal GTPase activation of the SR subunit SRPRA. Forms a guanosine 5'-triphosphate (GTP)-dependent complex with the SR subunit SRPRA. SR compaction and GTPase mediated rearrangement of SR drive SRP-mediated cotranslational protein translocation into the ER. Requires the presence of SRP9/SRP14 and/or SRP19 to stably interact with RNA. In Hordeum vulgare (Barley), this protein is Signal recognition particle subunit SRP54 1 (SRP54-1).